A 784-amino-acid chain; its full sequence is Endonuclease MutS2 (784 aa).

Residue 335–342 (GPNTGGKT) coordinates ATP. A Smr domain is found at 709–784 (LDLRGERYED…GTGVTIVELK (76 aa)).

The protein belongs to the DNA mismatch repair MutS family. MutS2 subfamily. In terms of assembly, homodimer. Binds to stalled ribosomes, contacting rRNA.

In terms of biological role, endonuclease that is involved in the suppression of homologous recombination and thus may have a key role in the control of bacterial genetic diversity. Its function is as follows. Acts as a ribosome collision sensor, splitting the ribosome into its 2 subunits. Detects stalled/collided 70S ribosomes which it binds and splits by an ATP-hydrolysis driven conformational change. Acts upstream of the ribosome quality control system (RQC), a ribosome-associated complex that mediates the extraction of incompletely synthesized nascent chains from stalled ribosomes and their subsequent degradation. Probably generates substrates for RQC. In Geobacillus kaustophilus (strain HTA426), this protein is Endonuclease MutS2.